We begin with the raw amino-acid sequence, 84 residues long: Small ribosomal subunit protein bS18 (84 aa).

It belongs to the bacterial ribosomal protein bS18 family. Part of the 30S ribosomal subunit. Forms a tight heterodimer with protein bS6.

Functionally, binds as a heterodimer with protein bS6 to the central domain of the 16S rRNA, where it helps stabilize the platform of the 30S subunit. The polypeptide is Small ribosomal subunit protein bS18 (Clostridium kluyveri (strain NBRC 12016)).